Reading from the N-terminus, the 376-residue chain is Chaperone protein DnaJ (376 aa).

The 66-residue stretch at 5–70 (DYYEVLGAAK…QKRAAYDQFG (66 aa)) folds into the J domain. The CR-type zinc finger occupies 134-212 (GCDEKIRIPT…CGGQGRVQNT (79 aa)). The Zn(2+) site is built by cysteine 147, cysteine 150, cysteine 164, cysteine 167, cysteine 186, cysteine 189, cysteine 200, and cysteine 203. 4 CXXCXGXG motif repeats span residues 147-154 (CDVCHGSG), 164-171 (CTTCGGVG), 186-193 (CPTCKGEG), and 200-207 (CGNCGGQG).

This sequence belongs to the DnaJ family. As to quaternary structure, homodimer. Requires Zn(2+) as cofactor.

It is found in the cytoplasm. Participates actively in the response to hyperosmotic and heat shock by preventing the aggregation of stress-denatured proteins and by disaggregating proteins, also in an autonomous, DnaK-independent fashion. Unfolded proteins bind initially to DnaJ; upon interaction with the DnaJ-bound protein, DnaK hydrolyzes its bound ATP, resulting in the formation of a stable complex. GrpE releases ADP from DnaK; ATP binding to DnaK triggers the release of the substrate protein, thus completing the reaction cycle. Several rounds of ATP-dependent interactions between DnaJ, DnaK and GrpE are required for fully efficient folding. Also involved, together with DnaK and GrpE, in the DNA replication of plasmids through activation of initiation proteins. This Alcanivorax borkumensis (strain ATCC 700651 / DSM 11573 / NCIMB 13689 / SK2) protein is Chaperone protein DnaJ.